Consider the following 1255-residue polypeptide: Cilia- and flagella-associated protein 337 B (1255 aa).

The EF-hand domain maps to 87–122; the sequence is KLVRCLTNLFEEIDLNGNGILEWDEFTNYVIEKATV. The Ca(2+) site is built by Asp100, Asn102, Asn104, and Glu111. WD repeat units lie at residues 228 to 269, 282 to 322, 326 to 365, 368 to 407, 410 to 449, 496 to 536, 538 to 577, 580 to 624, 625 to 664, 669 to 708, 769 to 808, and 844 to 883; these read DLKT…WVLA, EFKN…KELE, AHTE…KKRV, EHTR…LIYK, GHSS…NVQC, VDDY…KIFS, VTQG…MIKA, KHSA…RTLE, LKDV…QNGS, TQYE…FKFQ, QQNL…TILE, and AHYE…LIDQ. Disordered stretches follow at residues 941 to 988 and 1140 to 1160; these read IKSL…NFNP and QQQV…QQPG. Low complexity predominate over residues 953–969; that stretch reads TQESSTQEQEAAQQPQQ. The segment covering 1148 to 1160 has biased composition (polar residues); the sequence is TEPSSNRSHQQPG.

This sequence belongs to the CFAP337 family. In terms of assembly, associates with components of the nexin-dynein regulatory complex (N-DRC) and the CFAP184:CFAP263 complex.

The protein localises to the cell projection. It localises to the cilium. Functionally, associates with components of the nexin-dynein regulatory complex (N-DRC), a key regulator of ciliary/flagellar motility, and might act as an inner dynein arm (IDA) hub or linkage. The sequence is that of Cilia- and flagella-associated protein 337 B from Tetrahymena thermophila (strain SB210).